A 163-amino-acid polypeptide reads, in one-letter code: Deoxyuridine 5'-triphosphate nucleotidohydrolase (163 aa).

Substrate is bound by residues 78–80 (RSG), asparagine 91, and 95–97 (TVD). The segment covering 140–151 (ERESLNETERGD) has biased composition (basic and acidic residues). Positions 140-163 (ERESLNETERGDGGFGHTGVNSQP) are disordered.

It belongs to the dUTPase family. It depends on Mg(2+) as a cofactor.

The enzyme catalyses dUTP + H2O = dUMP + diphosphate + H(+). The protein operates within pyrimidine metabolism; dUMP biosynthesis; dUMP from dCTP (dUTP route): step 2/2. Its function is as follows. This enzyme is involved in nucleotide metabolism: it produces dUMP, the immediate precursor of thymidine nucleotides and it decreases the intracellular concentration of dUTP so that uracil cannot be incorporated into DNA. The chain is Deoxyuridine 5'-triphosphate nucleotidohydrolase from Heliobacterium modesticaldum (strain ATCC 51547 / Ice1).